The sequence spans 164 residues: Protein DOWNSTREAM OF FLC (164 aa).

The first 23 residues, 1–23, serve as a signal peptide directing secretion; it reads MAKSFVPLIAVLCVLVLPLAAMA. Intrachain disulfides connect cysteine 36–cysteine 107, cysteine 39–cysteine 148, and cysteine 60–cysteine 95.

This sequence belongs to the Ole e I family.

Its subcellular location is the secreted. Its function is as follows. Part of a three-gene cluster containing FLC, UFC and DFC, which is coordinately regulated in response to vernalization. Not regulated by FLX. The protein is Protein DOWNSTREAM OF FLC (DFC) of Arabidopsis thaliana (Mouse-ear cress).